A 213-amino-acid polypeptide reads, in one-letter code: 2-dehydro-3-deoxy-phosphogluconate aldolase (213 aa).

Glu-45 (proton acceptor) is an active-site residue. 3 residues coordinate pyruvate: Arg-49, Thr-73, and Lys-133. Lys-133 serves as the catalytic Schiff-base intermediate with substrate.

The protein belongs to the KHG/KDPG aldolase family. As to quaternary structure, homotrimer.

It is found in the cytoplasm. The catalysed reaction is 2-dehydro-3-deoxy-6-phospho-D-gluconate = D-glyceraldehyde 3-phosphate + pyruvate. Its pathway is carbohydrate acid metabolism; 2-dehydro-3-deoxy-D-gluconate degradation; D-glyceraldehyde 3-phosphate and pyruvate from 2-dehydro-3-deoxy-D-gluconate: step 2/2. In terms of biological role, involved in the degradation of glucose via the Entner-Doudoroff pathway. Catalyzes the reversible, stereospecific retro-aldol cleavage of 2-keto-3-deoxy-6-phosphogluconate (KDPG) to pyruvate and D-glyceraldehyde-3-phosphate. This is 2-dehydro-3-deoxy-phosphogluconate aldolase (eda) from Dickeya dadantii (strain 3937) (Erwinia chrysanthemi (strain 3937)).